Here is an 806-residue protein sequence, read N- to C-terminus: Phosphatidylinositol 4-kinase beta (806 aa).

Residues 55-247 form the PIK helical domain; that stretch reads LDKVKLIRGS…GTKLRKLILS (193 aa). Disordered regions lie at residues 69 to 104 and 253 to 310; these read LDKI…SASR and AHKK…DEPV. Positions 283–302 are enriched in polar residues; the sequence is DATVSISLSSNLKRTSSNPK. In terms of domain architecture, PI3K/PI4K catalytic spans 525–791; the sequence is EPWQEKVRRI…MVDGSMRSIT (267 aa). The segment at 531 to 537 is G-loop; sequence VRRIREG. Residues 658–666 are catalytic loop; the sequence is QVKDRHNGN. Residues 677-701 are activation loop; it reads HIDFGFILSSSPRNLGFETSAFKLT.

The protein belongs to the PI3/PI4-kinase family. Type III PI4K subfamily. The cofactor is Mg(2+). It depends on Mn(2+) as a cofactor.

It localises to the endomembrane system. It is found in the mitochondrion outer membrane. The protein resides in the rough endoplasmic reticulum membrane. It carries out the reaction a 1,2-diacyl-sn-glycero-3-phospho-(1D-myo-inositol) + ATP = a 1,2-diacyl-sn-glycero-3-phospho-(1D-myo-inositol 4-phosphate) + ADP + H(+). Its function is as follows. Phosphorylates phosphatidylinositol (PI) in the first committed step in the production of the second messenger inositol-1,4,5,-trisphosphate (PIP). May play an important role in the inner ear development. In Xenopus tropicalis (Western clawed frog), this protein is Phosphatidylinositol 4-kinase beta (pi4kb).